Here is a 256-residue protein sequence, read N- to C-terminus: 5'-nucleotidase SurE (256 aa).

Residues Asp8, Asp9, Ser39, and Asn91 each contribute to the a divalent metal cation site.

The protein belongs to the SurE nucleotidase family. A divalent metal cation is required as a cofactor.

It is found in the cytoplasm. The enzyme catalyses a ribonucleoside 5'-phosphate + H2O = a ribonucleoside + phosphate. Its function is as follows. Nucleotidase that shows phosphatase activity on nucleoside 5'-monophosphates. This is 5'-nucleotidase SurE from Marinobacter nauticus (strain ATCC 700491 / DSM 11845 / VT8) (Marinobacter aquaeolei).